Consider the following 324-residue polypeptide: Putative arsenical pump-driving ATPase (324 aa).

21-28 is an ATP binding site; that stretch reads GKGGVGKT.

It belongs to the arsA ATPase family.

It catalyses the reaction arsenite(in) + ATP + H2O = arsenite(out) + ADP + phosphate + H(+). Anion-transporting ATPase. Catalyzes the extrusion of arsenite. The polypeptide is Putative arsenical pump-driving ATPase (Methanothermobacter thermautotrophicus (strain ATCC 29096 / DSM 1053 / JCM 10044 / NBRC 100330 / Delta H) (Methanobacterium thermoautotrophicum)).